Consider the following 331-residue polypeptide: Biotin synthase (331 aa).

The 226-residue stretch at 52–277 folds into the Radical SAM core domain; the sequence is PEVEVEGIVS…RTILRYAGGR (226 aa). [4Fe-4S] cluster contacts are provided by C67, C71, and C74. Residues C110, C202, and R272 each contribute to the [2Fe-2S] cluster site.

Belongs to the radical SAM superfamily. Biotin synthase family. In terms of assembly, homodimer. [4Fe-4S] cluster serves as cofactor. The cofactor is [2Fe-2S] cluster.

It carries out the reaction (4R,5S)-dethiobiotin + (sulfur carrier)-SH + 2 reduced [2Fe-2S]-[ferredoxin] + 2 S-adenosyl-L-methionine = (sulfur carrier)-H + biotin + 2 5'-deoxyadenosine + 2 L-methionine + 2 oxidized [2Fe-2S]-[ferredoxin]. It functions in the pathway cofactor biosynthesis; biotin biosynthesis; biotin from 7,8-diaminononanoate: step 2/2. In terms of biological role, catalyzes the conversion of dethiobiotin (DTB) to biotin by the insertion of a sulfur atom into dethiobiotin via a radical-based mechanism. The protein is Biotin synthase of Salinispora tropica (strain ATCC BAA-916 / DSM 44818 / JCM 13857 / NBRC 105044 / CNB-440).